Here is a 1406-residue protein sequence, read N- to C-terminus: DNA-directed RNA polymerase subunit beta' (1406 aa).

Zn(2+)-binding residues include Cys-70, Cys-72, Cys-85, and Cys-88. Mg(2+) contacts are provided by Asp-460, Asp-462, and Asp-464. Zn(2+)-binding residues include Cys-814, Cys-889, Cys-896, and Cys-899.

This sequence belongs to the RNA polymerase beta' chain family. As to quaternary structure, the RNAP catalytic core consists of 2 alpha, 1 beta, 1 beta' and 1 omega subunit. When a sigma factor is associated with the core the holoenzyme is formed, which can initiate transcription. Mg(2+) serves as cofactor. The cofactor is Zn(2+).

The catalysed reaction is RNA(n) + a ribonucleoside 5'-triphosphate = RNA(n+1) + diphosphate. In terms of biological role, DNA-dependent RNA polymerase catalyzes the transcription of DNA into RNA using the four ribonucleoside triphosphates as substrates. The sequence is that of DNA-directed RNA polymerase subunit beta' from Psychromonas ingrahamii (strain DSM 17664 / CCUG 51855 / 37).